A 468-amino-acid chain; its full sequence is Argininosuccinate lyase (468 aa).

This sequence belongs to the lyase 1 family. Argininosuccinate lyase subfamily.

The protein resides in the cytoplasm. The catalysed reaction is 2-(N(omega)-L-arginino)succinate = fumarate + L-arginine. It functions in the pathway amino-acid biosynthesis; L-arginine biosynthesis; L-arginine from L-ornithine and carbamoyl phosphate: step 3/3. This is Argininosuccinate lyase from Alkalilimnicola ehrlichii (strain ATCC BAA-1101 / DSM 17681 / MLHE-1).